The chain runs to 201 residues: MKEFKAVFPKALIIFMIFTILCGGIYTIFITGISQLIFPKQANGSIIEVNGKKYGSVLLAQQYNDEKHLWGRIMNIDTDTFVDDNGKKLAYSAPSNLSPASKEYEALVKERVDKIKANHPEQDDKAIPVDLVTCSGSGLDPHISVAAAKYQVNRIAKNNNMKIKDVEKIIDKYTSGKLFGVLGEKTVNVLEVNLAIDGILK.

A helical transmembrane segment spans residues 13–33 (IIFMIFTILCGGIYTIFITGI).

Belongs to the KdpC family. The system is composed of three essential subunits: KdpA, KdpB and KdpC.

Its subcellular location is the cell membrane. In terms of biological role, part of the high-affinity ATP-driven potassium transport (or Kdp) system, which catalyzes the hydrolysis of ATP coupled with the electrogenic transport of potassium into the cytoplasm. This subunit acts as a catalytic chaperone that increases the ATP-binding affinity of the ATP-hydrolyzing subunit KdpB by the formation of a transient KdpB/KdpC/ATP ternary complex. In Clostridium botulinum (strain Eklund 17B / Type B), this protein is Potassium-transporting ATPase KdpC subunit.